The primary structure comprises 88 residues: MEDTVKITAEELKGYIERIEKLEQEKRDVQDHIRDVYAKAADEGWDIKVMKQIIRLRKMDDDDREEQEILLDTYKRALGMSYEEELSE.

It belongs to the UPF0335 family.

The chain is UPF0335 protein WD_0557 from Wolbachia pipientis wMel.